The sequence spans 284 residues: Bifunctional protein FolD (284 aa).

Residues 165–167, Ser190, and Ile231 contribute to the NADP(+) site; that span reads GRS.

It belongs to the tetrahydrofolate dehydrogenase/cyclohydrolase family. Homodimer.

It catalyses the reaction (6R)-5,10-methylene-5,6,7,8-tetrahydrofolate + NADP(+) = (6R)-5,10-methenyltetrahydrofolate + NADPH. The enzyme catalyses (6R)-5,10-methenyltetrahydrofolate + H2O = (6R)-10-formyltetrahydrofolate + H(+). It functions in the pathway one-carbon metabolism; tetrahydrofolate interconversion. Catalyzes the oxidation of 5,10-methylenetetrahydrofolate to 5,10-methenyltetrahydrofolate and then the hydrolysis of 5,10-methenyltetrahydrofolate to 10-formyltetrahydrofolate. This chain is Bifunctional protein FolD, found in Lysinibacillus sphaericus (strain C3-41).